We begin with the raw amino-acid sequence, 60 residues long: Cecropin-B (60 aa).

An N-terminal signal peptide occupies residues 1 to 25; sequence MNFTKLFILVAIAVLVVVGVQPVDG. Leu-59 is modified (leucine amide).

The protein belongs to the cecropin family.

It is found in the secreted. Functionally, cecropins have lytic and antibacterial activity against several Gram-positive and Gram-negative bacteria. The polypeptide is Cecropin-B (CecB) (Anopheles gambiae (African malaria mosquito)).